A 75-amino-acid polypeptide reads, in one-letter code: DNA-directed RNA polymerase subunit omega (75 aa).

The protein belongs to the RNA polymerase subunit omega family. In cyanobacteria the RNAP catalytic core is composed of 2 alpha, 1 beta, 1 beta', 1 gamma and 1 omega subunit. When a sigma factor is associated with the core the holoenzyme is formed, which can initiate transcription.

It catalyses the reaction RNA(n) + a ribonucleoside 5'-triphosphate = RNA(n+1) + diphosphate. Its function is as follows. Promotes RNA polymerase assembly. Latches the N- and C-terminal regions of the beta' subunit thereby facilitating its interaction with the beta and alpha subunits. In Prochlorococcus marinus (strain MIT 9211), this protein is DNA-directed RNA polymerase subunit omega.